A 274-amino-acid chain; its full sequence is Actin-binding protein Smlt3054 (274 aa).

ANK repeat units lie at residues 192–221 (SGNT…DVAA) and 225–254 (HGWA…NPEQ). Residues 251-274 (NPEQPGWRGRTPTRMHRHEQTQAL) form a disordered region.

In terms of assembly, exists as a dimer as well as a higher order oligomer.

Its subcellular location is the secreted. It localises to the periplasm. Directly binds F-actin, which results in thickened and distorted F-actin fibers, and affects cellular F-actin localization. Thus, may be a host effector whose function is to disrupt host actin cytoskeletal structure, which may enhance invasion. The polypeptide is Actin-binding protein Smlt3054 (Stenotrophomonas maltophilia (strain K279a)).